Reading from the N-terminus, the 622-residue chain is Coiled-coil domain-containing protein 17 (622 aa).

Coiled coils occupy residues 81–102 (RSALKRLTEEVQWLRLSLQEMR), 146–207 (ARRV…LEVL), and 294–320 (GELPVVEAENRRLEAEILALQMQRGRA). Disordered regions lie at residues 334 to 356 (SLQPKGRRDPPLLPPPVAPPLPP) and 584 to 622 (PAVGFADPPPRTEEPLSGVKDRDEGLGPHHSSDLPPVSF). The segment covering 344 to 356 (PLLPPPVAPPLPP) has biased composition (pro residues). Positions 593–615 (PRTEEPLSGVKDRDEGLGPHHSS) are enriched in basic and acidic residues.

The sequence is that of Coiled-coil domain-containing protein 17 (CCDC17) from Homo sapiens (Human).